Reading from the N-terminus, the 376-residue chain is Dihydroorotate dehydrogenase (quinone) (376 aa).

FMN contacts are provided by residues Ala-78–Lys-82 and Thr-102. Lys-82 is a substrate binding site. Asn-127–Phe-131 is a substrate binding site. Positions 157 and 190 each coordinate FMN. Residue Asn-190 participates in substrate binding. Ser-193 acts as the Nucleophile in catalysis. Position 195 (Asn-195) interacts with substrate. FMN contacts are provided by Lys-228 and Thr-256. A substrate-binding site is contributed by Asn-257 to Thr-258. FMN is bound by residues Gly-286, Gly-315, and Tyr-336 to Thr-337.

It belongs to the dihydroorotate dehydrogenase family. Type 2 subfamily. Monomer. FMN is required as a cofactor.

The protein localises to the cell membrane. It catalyses the reaction (S)-dihydroorotate + a quinone = orotate + a quinol. The protein operates within pyrimidine metabolism; UMP biosynthesis via de novo pathway; orotate from (S)-dihydroorotate (quinone route): step 1/1. Its function is as follows. Catalyzes the conversion of dihydroorotate to orotate with quinone as electron acceptor. In Nostoc sp. (strain PCC 7120 / SAG 25.82 / UTEX 2576), this protein is Dihydroorotate dehydrogenase (quinone).